An 83-amino-acid chain; its full sequence is MAHKKGAGSTKNGRDSNAKRLGVKRFGGEQVTAGNILIRQRGTKFKPGINVGCGKDFTLFALTNGIVKFDYANGTQKCINIID.

Residues 1-21 (MAHKKGAGSTKNGRDSNAKRL) are disordered.

This sequence belongs to the bacterial ribosomal protein bL27 family.

Its subcellular location is the plastid. The protein resides in the chloroplast. This chain is Large ribosomal subunit protein bL27c, found in Phaeodactylum tricornutum (strain CCAP 1055/1).